An 874-amino-acid chain; its full sequence is Alanine--tRNA ligase (874 aa).

4 residues coordinate Zn(2+): His-563, His-567, Cys-665, and His-669.

It belongs to the class-II aminoacyl-tRNA synthetase family. The cofactor is Zn(2+).

It localises to the cytoplasm. It carries out the reaction tRNA(Ala) + L-alanine + ATP = L-alanyl-tRNA(Ala) + AMP + diphosphate. Its function is as follows. Catalyzes the attachment of alanine to tRNA(Ala) in a two-step reaction: alanine is first activated by ATP to form Ala-AMP and then transferred to the acceptor end of tRNA(Ala). Also edits incorrectly charged Ser-tRNA(Ala) and Gly-tRNA(Ala) via its editing domain. The polypeptide is Alanine--tRNA ligase (Aeromonas salmonicida (strain A449)).